Reading from the N-terminus, the 130-residue chain is Small ribosomal subunit protein uS8 (130 aa).

It belongs to the universal ribosomal protein uS8 family. As to quaternary structure, part of the 30S ribosomal subunit. Contacts proteins S5 and S12.

In terms of biological role, one of the primary rRNA binding proteins, it binds directly to 16S rRNA central domain where it helps coordinate assembly of the platform of the 30S subunit. The protein is Small ribosomal subunit protein uS8 of Saccharophagus degradans (strain 2-40 / ATCC 43961 / DSM 17024).